Consider the following 139-residue polypeptide: Ribonuclease P/MRP protein subunit POP5 (139 aa).

It belongs to the eukaryotic/archaeal RNase P protein component 2 family.

It localises to the nucleus. The catalysed reaction is Endonucleolytic cleavage of RNA, removing 5'-extranucleotides from tRNA precursor.. Functionally, component of ribonuclease P, a protein complex that generates mature tRNA molecules by cleaving their 5'-ends. Also a component of RNase MRP, which cleaves pre-rRNA sequences. The protein is Ribonuclease P/MRP protein subunit POP5 of Schizosaccharomyces pombe (strain 972 / ATCC 24843) (Fission yeast).